The primary structure comprises 194 residues: MRISTVDRRQQLIDAAIRVIRRDGVESASLRTIASEAKASLAAVHVCFTNKDELMQAAAAELLQQLVRSIPRVVDGSEDVRAIAHRVMDLFWAQMVSDELNILAQFEIGIWAKRNPHHGDLSRTVYSDYEKEISKLLVAAAKRQKQTIAARNVARALIVIMDGCSLQYFADPSDPRHKDLCDNLVDAYLDRVGL.

Residues 6–66 (VDRRQQLIDA…AAAAELLQQL (61 aa)) form the HTH tetR-type domain. Positions 29 to 48 (SLRTIASEAKASLAAVHVCF) form a DNA-binding region, H-T-H motif.

As to quaternary structure, homodimer.

With respect to regulation, 6-hydroxy-D-nicotine and 6-hydroxy-L-nicotine prevent HdnoR from binding to the IR1 DNA. Both 6-hydroxy-nicotine enantiomers prevent DNA-protein complex formation at micromolar concentrations, with the D-enantiomer being twice as potent as the L-enantiomer. A thousand-fold higher L-nicotine concentration is required to elicit a similar effect. Represses expression of the 6-hydroxy-D-nicotine oxidase (6-hdno). Acts by binding to a gene operator site consisting of two inverted repeats, IR1 (covering the 6-hdno promoter region) and IR2 (situated upstream from the 6-hdno promoter). Binding to one site may stimulate binding of the protein to the second site. This Paenarthrobacter nicotinovorans (Arthrobacter nicotinovorans) protein is HTH-type nicotine-responsive transcriptional repressor HdnoR.